A 92-amino-acid chain; its full sequence is Small ribosomal subunit protein uS19 (92 aa).

It belongs to the universal ribosomal protein uS19 family.

Functionally, protein S19 forms a complex with S13 that binds strongly to the 16S ribosomal RNA. This chain is Small ribosomal subunit protein uS19, found in Listeria innocua serovar 6a (strain ATCC BAA-680 / CLIP 11262).